A 392-amino-acid chain; its full sequence is Succinyl-diaminopimelate desuccinylase (392 aa).

H77 provides a ligand contact to Zn(2+). Residue D79 is part of the active site. D110 is a Zn(2+) binding site. Residue E144 is the Proton acceptor of the active site. Zn(2+) is bound by residues E145, E173, and H359.

The protein belongs to the peptidase M20A family. DapE subfamily. Homodimer. Zn(2+) serves as cofactor. It depends on Co(2+) as a cofactor.

It carries out the reaction N-succinyl-(2S,6S)-2,6-diaminopimelate + H2O = (2S,6S)-2,6-diaminopimelate + succinate. It functions in the pathway amino-acid biosynthesis; L-lysine biosynthesis via DAP pathway; LL-2,6-diaminopimelate from (S)-tetrahydrodipicolinate (succinylase route): step 3/3. Its function is as follows. Catalyzes the hydrolysis of N-succinyl-L,L-diaminopimelic acid (SDAP), forming succinate and LL-2,6-diaminopimelate (DAP), an intermediate involved in the bacterial biosynthesis of lysine and meso-diaminopimelic acid, an essential component of bacterial cell walls. The polypeptide is Succinyl-diaminopimelate desuccinylase (Thiobacillus denitrificans (strain ATCC 25259 / T1)).